Consider the following 125-residue polypeptide: Short coiled-coil protein (125 aa).

The tract at residues 1 to 31 is disordered; the sequence is MSKMDGLSTGEEEDSTFTSISLEDDTDHSLK. The stretch at 43–101 forms a coiled coil; that stretch reads KMMNADMDAVDAENQVELEEKTRLINQVLELQHTLEDLSARVDAVKEENLKLKSENQVL.

It belongs to the SCOC family. In terms of assembly, homodimer. Interacts with ARL1, ARL2 and ARL3. Directly interacts with FEZ1 and UVRAG. The interaction with UVRAG is reduced by amino acid starvation, but the complex is stabilized in the presence of FEZ1. Interacts with NRBF2.

It localises to the golgi apparatus membrane. Its subcellular location is the golgi apparatus. The protein resides in the trans-Golgi network. The protein localises to the cytoplasm. It is found in the cytosol. Positive regulator of amino acid starvation-induced autophagy. The protein is Short coiled-coil protein (Scoc) of Mus musculus (Mouse).